Consider the following 940-residue polypeptide: Isoleucine--tRNA ligase (940 aa).

The short motif at 58–68 is the 'HIGH' region element; sequence PYANGSIHIGH. An L-isoleucyl-5'-AMP-binding site is contributed by glutamate 564. The short motif at 605-609 is the 'KMSKS' region element; it reads KMSKS. Lysine 608 lines the ATP pocket. 4 residues coordinate Zn(2+): cysteine 903, cysteine 906, cysteine 923, and cysteine 926.

Belongs to the class-I aminoacyl-tRNA synthetase family. IleS type 1 subfamily. In terms of assembly, monomer. Zn(2+) is required as a cofactor.

The protein resides in the cytoplasm. It catalyses the reaction tRNA(Ile) + L-isoleucine + ATP = L-isoleucyl-tRNA(Ile) + AMP + diphosphate. Its function is as follows. Catalyzes the attachment of isoleucine to tRNA(Ile). As IleRS can inadvertently accommodate and process structurally similar amino acids such as valine, to avoid such errors it has two additional distinct tRNA(Ile)-dependent editing activities. One activity is designated as 'pretransfer' editing and involves the hydrolysis of activated Val-AMP. The other activity is designated 'posttransfer' editing and involves deacylation of mischarged Val-tRNA(Ile). The protein is Isoleucine--tRNA ligase of Shewanella sp. (strain MR-7).